We begin with the raw amino-acid sequence, 546 residues long: Chaperonin GroEL (546 aa).

ATP-binding positions include 30-33 (TLGP), K51, 87-91 (DGTTT), G415, 479-481 (NAA), and D495. The tract at residues 527–546 (EEKPDVSASSGGMGGMGGMM) is disordered. A compositionally biased stretch (gly residues) spans 537 to 546 (GGMGGMGGMM).

This sequence belongs to the chaperonin (HSP60) family. As to quaternary structure, forms a cylinder of 14 subunits composed of two heptameric rings stacked back-to-back. Interacts with the co-chaperonin GroES.

It localises to the cytoplasm. It carries out the reaction ATP + H2O + a folded polypeptide = ADP + phosphate + an unfolded polypeptide.. Together with its co-chaperonin GroES, plays an essential role in assisting protein folding. The GroEL-GroES system forms a nano-cage that allows encapsulation of the non-native substrate proteins and provides a physical environment optimized to promote and accelerate protein folding. The protein is Chaperonin GroEL of Baumannia cicadellinicola subsp. Homalodisca coagulata.